Here is a 217-residue protein sequence, read N- to C-terminus: Thiopurine S-methyltransferase (217 aa).

S-adenosyl-L-methionine-binding residues include Trp11, Leu46, Glu67, and Arg122.

It belongs to the class I-like SAM-binding methyltransferase superfamily. TPMT family.

The protein resides in the cytoplasm. The enzyme catalyses S-adenosyl-L-methionine + a thiopurine = S-adenosyl-L-homocysteine + a thiopurine S-methylether.. The protein is Thiopurine S-methyltransferase of Vibrio vulnificus (strain YJ016).